The following is a 105-amino-acid chain: Probable tetrachloroethene reductive dehalogenase membrane anchor protein (105 aa).

3 helical membrane passes run 3–23 (IYDVLIWMALGMTALLIQYGI), 35–55 (IPLQICGFLANFFFIFALAWG), and 66–86 (AIGMGFIFFGGTALIPAIITY).

The protein belongs to the PceB family.

Its subcellular location is the cell membrane. Its function is as follows. May act as a membrane anchor for the tetrachloroethene reductive dehalogenase PceA. The protein is Probable tetrachloroethene reductive dehalogenase membrane anchor protein of Desulfitobacterium hafniense (Desulfitobacterium frappieri).